A 305-amino-acid polypeptide reads, in one-letter code: Ribonuclease BN (305 aa).

7 residues coordinate Zn(2+): H64, H66, D68, H69, H141, D212, and H270. The active-site Proton acceptor is the D68.

It belongs to the RNase Z family. RNase BN subfamily. In terms of assembly, homodimer. Zn(2+) is required as a cofactor.

In terms of biological role, zinc phosphodiesterase, which has both exoribonuclease and endoribonuclease activities. This Escherichia coli O157:H7 protein is Ribonuclease BN.